The chain runs to 1071 residues: Fused isobutyryl-CoA mutase (1071 aa).

A B12-binding domain is found at 12 to 149; sequence PVRFVTSAAL…QTCDVDLTGE (138 aa). Residue histidine 25 coordinates adenosylcob(III)alamin. The segment at 153-400 is GTPase chaperone MeaI; it reads VEAVLAGERT…YQHLLELLGA (248 aa). 203–208 is a GTP binding site; sequence GSGKSS. Mg(2+) is bound by residues serine 207, valine 232, aspartate 233, and aspartate 246. Arginine 249 provides a ligand contact to GTP. 2 residues coordinate Mg(2+): glutamate 293 and threonine 294. 340–343 is a GTP binding site; the sequence is NKFE. The segment at 401-558 is linker; the sequence is RGLPVDEGVL…RSENLPGHFP (158 aa). Residues phenylalanine 566, arginine 601, arginine 707, tyrosine 751, serine 800, arginine 835, and lysine 840 each contribute to the substrate site. GTP contacts are provided by glutamate 952 and asparagine 1070.

It belongs to the IcmF family. Homodimer. Adenosylcob(III)alamin is required as a cofactor. Mg(2+) serves as cofactor.

The enzyme catalyses 2-methylpropanoyl-CoA = butanoyl-CoA. The catalysed reaction is GTP + H2O = GDP + phosphate + H(+). In terms of biological role, catalyzes the reversible interconversion of isobutyryl-CoA and n-butyryl-CoA, using radical chemistry. Also exhibits GTPase activity, associated with its G-protein domain (MeaI) that functions as a chaperone that assists cofactor delivery and proper holo-enzyme assembly. Does not exhibit methylmalonyl-CoA mutase (MCM) activity. The protein is Fused isobutyryl-CoA mutase of Nocardia farcinica (strain IFM 10152).